The following is a 358-amino-acid chain: Photosystem II protein D1 (358 aa).

The next 3 membrane-spanning stretches (helical) occupy residues 29 to 46 (YVGW…AATI), 116 to 131 (HFLI…QWEL), and 140 to 154 (WICV…AATS). Histidine 116 contacts chlorophyll a. Tryptophan 124 contributes to the pheophytin a binding site. Residues aspartate 168 and glutamate 187 each contribute to the [CaMn4O5] cluster site. Residues 195–216 (FHQLGVAGVFGGSLFCAMHGSL) form a helical membrane-spanning segment. A chlorophyll a-binding site is contributed by histidine 196. Residues histidine 213 and 262–263 (SF) contribute to the a quinone site. Histidine 213 is a Fe cation binding site. Histidine 270 is a binding site for Fe cation. A helical transmembrane segment spans residues 272 to 286 (FLAAWPVVCIWFTAL). [CaMn4O5] cluster-binding residues include histidine 330, glutamate 331, aspartate 340, and alanine 342. The propeptide occupies 343 to 358 (AGEVLPIALQSPAING).

The protein belongs to the reaction center PufL/M/PsbA/D family. As to quaternary structure, PSII is composed of 1 copy each of membrane proteins PsbA, PsbB, PsbC, PsbD, PsbE, PsbF, PsbH, PsbI, PsbJ, PsbK, PsbL, PsbM, PsbT, PsbX, PsbY, PsbZ, Psb30/Ycf12, peripheral proteins PsbO, CyanoQ (PsbQ), PsbU, PsbV and a large number of cofactors. It forms dimeric complexes. The D1/D2 heterodimer binds P680, chlorophylls that are the primary electron donor of PSII, and subsequent electron acceptors. It shares a non-heme iron and each subunit binds pheophytin, quinone, additional chlorophylls, carotenoids and lipids. D1 provides most of the ligands for the Mn4-Ca-O5 cluster of the oxygen-evolving complex (OEC). There is also a Cl(-1) ion associated with D1 and D2, which is required for oxygen evolution. The PSII complex binds additional chlorophylls, carotenoids and specific lipids. serves as cofactor. Tyr-159 forms a radical intermediate that is referred to as redox-active TyrZ, YZ or Y-Z. Post-translationally, C-terminally processed by CtpA; processing is essential to allow assembly of the oxygen-evolving complex and thus photosynthetic growth.

It localises to the cellular thylakoid membrane. It catalyses the reaction 2 a plastoquinone + 4 hnu + 2 H2O = 2 a plastoquinol + O2. Its function is as follows. Photosystem II (PSII) is a light-driven water:plastoquinone oxidoreductase that uses light energy to abstract electrons from H(2)O, generating O(2) and a proton gradient subsequently used for ATP formation. It consists of a core antenna complex that captures photons, and an electron transfer chain that converts photonic excitation into a charge separation. The D1/D2 (PsbA/PsbD) reaction center heterodimer binds P680, the primary electron donor of PSII as well as several subsequent electron acceptors. This is Photosystem II protein D1 from Mastigocladus laminosus (Fischerella sp.).